Reading from the N-terminus, the 330-residue chain is Polyprenal reductase (330 aa).

The Cytoplasmic portion of the chain corresponds to 1–16; it reads MAGWAGFELSALNPLR. The chain crosses the membrane as a helical span at residues 17-37; it reads TLWLALAAAFLFALLLQLAPA. The Lumenal portion of the chain corresponds to 38 to 80; the sequence is RLLPSCALFQDLLRYGKTKQSGSRRPAVCRAFDVPKRYFSHFY. A helical membrane pass occupies residues 81-101; sequence VISVVWNGSLLWLLSQSLFLG. Over 102 to 132 the chain is Cytoplasmic; the sequence is APFPNWLSALLRTLGATQFQALEMESKASRM. The helical transmembrane segment at 133-153 threads the bilayer; sequence PAAELALSAFLVLVFLWVHSL. Residues 154–169 lie on the Lumenal side of the membrane; sequence RRLFECFYVSVFSNAA. Residues 170 to 190 traverse the membrane as a helical segment; it reads IHVVQYCFGLVYYVLVGLTVL. Over 191-206 the chain is Cytoplasmic; sequence SQVPMDDKNVYVLGKN. A helical transmembrane segment spans residues 207–227; that stretch reads LLIQARWFHILGMVMFFWSSA. Over 228 to 277 the chain is Lumenal; it reads HQYKCHVILSNLRRNKKGVVIHCQHRIPFGDWFEYVSSANYLAELMIYIS. The chain crosses the membrane as a helical span at residues 278–298; the sequence is MAVTFGLHNLTWWLVVTYVFS. Topologically, residues 299 to 330 are cytoplasmic; it reads SQALSAFFNHKFYRSTFVSYPKHRKAFLPFLF.

The protein belongs to the steroid 5-alpha reductase family. Polyprenal reductase subfamily.

The protein resides in the endoplasmic reticulum membrane. It carries out the reaction a di-trans,poly-cis-dolichal + NADP(+) = a di-trans,poly-cis-polyprenal + NADPH + H(+). The catalysed reaction is a 3-oxo-5alpha-steroid + NADP(+) = a 3-oxo-Delta(4)-steroid + NADPH + H(+). It catalyses the reaction androst-4-ene-3,17-dione + NADPH + H(+) = 5alpha-androstan-3,17-dione + NADP(+). The enzyme catalyses 17beta-hydroxy-5alpha-androstan-3-one + NADP(+) = testosterone + NADPH + H(+). It participates in protein modification; protein glycosylation. Its function is as follows. Plays a key role in early steps of protein N-linked glycosylation by being involved in the conversion of polyprenol into dolichol. Acts as a polyprenal reductase that mediates the reduction of polyprenal into dolichal in a NADP-dependent mechanism. Dolichols are required for the synthesis of dolichol-linked monosaccharides and the oligosaccharide precursor used for N-glycosylation. Also able to convert testosterone (T) into 5-alpha-dihydrotestosterone (DHT). This Mus musculus (Mouse) protein is Polyprenal reductase.